We begin with the raw amino-acid sequence, 87 residues long: Large ribosomal subunit protein eL31 (87 aa).

The protein belongs to the eukaryotic ribosomal protein eL31 family.

This Methanoculleus marisnigri (strain ATCC 35101 / DSM 1498 / JR1) protein is Large ribosomal subunit protein eL31.